The following is a 79-amino-acid chain: Large ribosomal subunit protein uL29 (79 aa).

It belongs to the universal ribosomal protein uL29 family.

The chain is Large ribosomal subunit protein uL29 from Gluconacetobacter diazotrophicus (strain ATCC 49037 / DSM 5601 / CCUG 37298 / CIP 103539 / LMG 7603 / PAl5).